Reading from the N-terminus, the 125-residue chain is Glucose-1-phosphate adenylyltransferase small subunit (125 aa).

Belongs to the bacterial/plant glucose-1-phosphate adenylyltransferase family. In terms of assembly, heterotetramer. As to expression, leaves.

The protein localises to the plastid. It is found in the chloroplast. It localises to the amyloplast. The enzyme catalyses alpha-D-glucose 1-phosphate + ATP + H(+) = ADP-alpha-D-glucose + diphosphate. Its pathway is glycan biosynthesis; starch biosynthesis. Activated by 3'phosphoglycerate, inhibited by orthophosphate. Allosteric regulation. Functionally, this protein plays a role in synthesis of starch. It catalyzes the synthesis of the activated glycosyl donor, ADP-glucose from Glc-1-P and ATP. The protein is Glucose-1-phosphate adenylyltransferase small subunit (GLG1) of Zea mays (Maize).